A 540-amino-acid polypeptide reads, in one-letter code: Cytochrome bc1 complex cytochrome b subunit (540 aa).

A helical membrane pass occupies residues 40-60 (EIALYSFIILLLTGVYLTLFF). Heme contacts are provided by His105 and His119. The next 3 membrane-spanning stretches (helical) occupy residues 109–129 (ALTF…TGAF), 137–157 (WIIG…GYSL), and 169–189 (IMSA…WLIF). 2 residues coordinate heme: His206 and His221. The next 5 membrane-spanning stretches (helical) occupy residues 207-227 (VLII…LVWY), 259-279 (FGLV…INAI), 325-345 (AFWV…YPFI), 371-391 (LGVM…NDLF), and 408-428 (IGLI…CLGL).

The protein belongs to the cytochrome b family. As to quaternary structure, the cytochrome bc1 complex is composed of a cytochrome b (QcrB), the Rieske protein iron-sulfur (QcrA) and a diheme cytochrome c (QcrC) subunit. Requires heme as cofactor.

The protein resides in the cell membrane. It catalyses the reaction a quinol + 2 Fe(III)-[cytochrome c](out) = a quinone + 2 Fe(II)-[cytochrome c](out) + 2 H(+)(out). In terms of biological role, cytochrome b subunit of the cytochrome bc1 complex, an essential component of the respiratory electron transport chain required for ATP synthesis. The bc1 complex catalyzes the oxidation of menaquinol and the reduction of cytochrome c in the respiratory chain. The bc1 complex operates through a Q-cycle mechanism that couples electron transfer to generation of the proton gradient that drives ATP synthesis. The polypeptide is Cytochrome bc1 complex cytochrome b subunit (qcrB) (Corynebacterium diphtheriae (strain ATCC 700971 / NCTC 13129 / Biotype gravis)).